A 64-amino-acid polypeptide reads, in one-letter code: DNA gyrase inhibitor YacG (64 aa).

Zn(2+)-binding residues include Cys-10, Cys-13, Cys-29, and Cys-33.

It belongs to the DNA gyrase inhibitor YacG family. As to quaternary structure, interacts with GyrB. It depends on Zn(2+) as a cofactor.

Its function is as follows. Inhibits all the catalytic activities of DNA gyrase by preventing its interaction with DNA. Acts by binding directly to the C-terminal domain of GyrB, which probably disrupts DNA binding by the gyrase. The protein is DNA gyrase inhibitor YacG of Pectobacterium carotovorum subsp. carotovorum (strain PC1).